A 227-amino-acid polypeptide reads, in one-letter code: Cytochrome c oxidase subunit 2 (227 aa).

The Mitochondrial intermembrane portion of the chain corresponds to 1–14 (MAHPAQLGFQDAAS). Residues 15–45 (PIMEELMYFHDHTLMIVFLISSLVLYIISLM) form a helical membrane-spanning segment. Over 46-59 (LTTELTHTSTMDAQ) the chain is Mitochondrial matrix. The chain crosses the membrane as a helical span at residues 60–87 (EVETVWTILPAVILILIALPSLRILYMM). At 88–227 (DEITTPSLTL…HFEEWLLSTL (140 aa)) the chain is on the mitochondrial intermembrane side. Positions 161, 196, 198, 200, 204, and 207 each coordinate Cu cation. Position 198 (Glu-198) interacts with Mg(2+).

Belongs to the cytochrome c oxidase subunit 2 family. In terms of assembly, component of the cytochrome c oxidase (complex IV, CIV), a multisubunit enzyme composed of 14 subunits. The complex is composed of a catalytic core of 3 subunits MT-CO1, MT-CO2 and MT-CO3, encoded in the mitochondrial DNA, and 11 supernumerary subunits COX4I, COX5A, COX5B, COX6A, COX6B, COX6C, COX7A, COX7B, COX7C, COX8 and NDUFA4, which are encoded in the nuclear genome. The complex exists as a monomer or a dimer and forms supercomplexes (SCs) in the inner mitochondrial membrane with NADH-ubiquinone oxidoreductase (complex I, CI) and ubiquinol-cytochrome c oxidoreductase (cytochrome b-c1 complex, complex III, CIII), resulting in different assemblies (supercomplex SCI(1)III(2)IV(1) and megacomplex MCI(2)III(2)IV(2)). Found in a complex with TMEM177, COA6, COX18, COX20, SCO1 and SCO2. Interacts with TMEM177 in a COX20-dependent manner. Interacts with COX20. Interacts with COX16. Requires Cu cation as cofactor.

It localises to the mitochondrion inner membrane. It carries out the reaction 4 Fe(II)-[cytochrome c] + O2 + 8 H(+)(in) = 4 Fe(III)-[cytochrome c] + 2 H2O + 4 H(+)(out). Functionally, component of the cytochrome c oxidase, the last enzyme in the mitochondrial electron transport chain which drives oxidative phosphorylation. The respiratory chain contains 3 multisubunit complexes succinate dehydrogenase (complex II, CII), ubiquinol-cytochrome c oxidoreductase (cytochrome b-c1 complex, complex III, CIII) and cytochrome c oxidase (complex IV, CIV), that cooperate to transfer electrons derived from NADH and succinate to molecular oxygen, creating an electrochemical gradient over the inner membrane that drives transmembrane transport and the ATP synthase. Cytochrome c oxidase is the component of the respiratory chain that catalyzes the reduction of oxygen to water. Electrons originating from reduced cytochrome c in the intermembrane space (IMS) are transferred via the dinuclear copper A center (CU(A)) of subunit 2 and heme A of subunit 1 to the active site in subunit 1, a binuclear center (BNC) formed by heme A3 and copper B (CU(B)). The BNC reduces molecular oxygen to 2 water molecules using 4 electrons from cytochrome c in the IMS and 4 protons from the mitochondrial matrix. This is Cytochrome c oxidase subunit 2 (MT-CO2) from Microcebus tavaratra (Northern rufous mouse lemur).